The chain runs to 633 residues: Glutamyl-tRNA(Gln) amidotransferase subunit E (633 aa).

The protein belongs to the GatB/GatE family. GatE subfamily. In terms of assembly, heterodimer of GatD and GatE.

The enzyme catalyses L-glutamyl-tRNA(Gln) + L-glutamine + ATP + H2O = L-glutaminyl-tRNA(Gln) + L-glutamate + ADP + phosphate + H(+). Functionally, allows the formation of correctly charged Gln-tRNA(Gln) through the transamidation of misacylated Glu-tRNA(Gln) in organisms which lack glutaminyl-tRNA synthetase. The reaction takes place in the presence of glutamine and ATP through an activated gamma-phospho-Glu-tRNA(Gln). The GatDE system is specific for glutamate and does not act on aspartate. The protein is Glutamyl-tRNA(Gln) amidotransferase subunit E of Saccharolobus islandicus (strain L.S.2.15 / Lassen #1) (Sulfolobus islandicus).